The chain runs to 92 residues: Elongation factor 1-beta (92 aa).

It belongs to the EF-1-beta/EF-1-delta family.

Its function is as follows. Promotes the exchange of GDP for GTP in EF-1-alpha/GDP, thus allowing the regeneration of EF-1-alpha/GTP that could then be used to form the ternary complex EF-1-alpha/GTP/AAtRNA. The polypeptide is Elongation factor 1-beta (ef1b) (Pyrobaculum aerophilum (strain ATCC 51768 / DSM 7523 / JCM 9630 / CIP 104966 / NBRC 100827 / IM2)).